Reading from the N-terminus, the 481-residue chain is Hyaluronidase-4 (481 aa).

Over 1-8 (MKVLSEGQ) the chain is Cytoplasmic. A helical membrane pass occupies residues 9–29 (LKLCVVQPVHLTSWLLIFFIL). Residues 30-453 (KSISCLKPAR…ADCREIKTAD (424 aa)) are Extracellular-facing. Intrachain disulfides connect Cys-59-Cys-351, Cys-223-Cys-237, Cys-376-Cys-387, Cys-381-Cys-435, and Cys-437-Cys-446. N-linked (GlcNAc...) asparagine glycans are attached at residues Asn-86 and Asn-115. Catalysis depends on Glu-147, which acts as the Proton donor. An N-linked (GlcNAc...) (complex) asparagine glycan is attached at Asn-177. A glycan (N-linked (GlcNAc...) asparagine) is linked at Asn-343. The helical transmembrane segment at 454 to 474 (GCSGVSPSPGSLMTLCLLLLA) threads the bilayer. Topologically, residues 475-481 (SYRSIQL) are cytoplasmic.

It belongs to the glycosyl hydrolase 56 family. As to expression, detected in placenta and skeletal muscle.

The protein localises to the membrane. It carries out the reaction Random hydrolysis of (1-&gt;4)-linkages between N-acetyl-beta-D-glucosamine and D-glucuronate residues in hyaluronate.. Endo-hyaluronidase that degrades hyaluronan to smaller oligosaccharide fragments. Also has chondroitin sulfate hydrolase activity, The best substrate being the galactosaminidic linkage in the sequence of a trisulfated tetrasaccharide. This is Hyaluronidase-4 (HYAL4) from Homo sapiens (Human).